A 146-amino-acid polypeptide reads, in one-letter code: Holo-[acyl-carrier-protein] synthase (146 aa).

Residues aspartate 9 and glutamate 58 each contribute to the Mg(2+) site.

Belongs to the P-Pant transferase superfamily. AcpS family. Mg(2+) serves as cofactor.

The protein resides in the cytoplasm. It catalyses the reaction apo-[ACP] + CoA = holo-[ACP] + adenosine 3',5'-bisphosphate + H(+). Functionally, transfers the 4'-phosphopantetheine moiety from coenzyme A to a Ser of acyl-carrier-protein. This Baumannia cicadellinicola subsp. Homalodisca coagulata protein is Holo-[acyl-carrier-protein] synthase.